A 573-amino-acid chain; its full sequence is Dihydroxy-acid dehydratase (573 aa).

The segment covering 1 to 14 has biased composition (basic and acidic residues); sequence MTEKSPKPHKRSDA. Residues 1-21 are disordered; that stretch reads MTEKSPKPHKRSDAITEGPNR. Cysteine 55 is a [2Fe-2S] cluster binding site. Aspartate 87 contributes to the Mg(2+) binding site. Residue cysteine 128 participates in [2Fe-2S] cluster binding. Mg(2+) contacts are provided by aspartate 129 and lysine 130. Lysine 130 bears the N6-carboxylysine mark. Cysteine 200 provides a ligand contact to [2Fe-2S] cluster. Position 450 (glutamate 450) interacts with Mg(2+). Serine 476 (proton acceptor) is an active-site residue.

It belongs to the IlvD/Edd family. Homodimer. Requires [2Fe-2S] cluster as cofactor. Mg(2+) is required as a cofactor.

The enzyme catalyses (2R)-2,3-dihydroxy-3-methylbutanoate = 3-methyl-2-oxobutanoate + H2O. The catalysed reaction is (2R,3R)-2,3-dihydroxy-3-methylpentanoate = (S)-3-methyl-2-oxopentanoate + H2O. It functions in the pathway amino-acid biosynthesis; L-isoleucine biosynthesis; L-isoleucine from 2-oxobutanoate: step 3/4. It participates in amino-acid biosynthesis; L-valine biosynthesis; L-valine from pyruvate: step 3/4. Functions in the biosynthesis of branched-chain amino acids. Catalyzes the dehydration of (2R,3R)-2,3-dihydroxy-3-methylpentanoate (2,3-dihydroxy-3-methylvalerate) into 2-oxo-3-methylpentanoate (2-oxo-3-methylvalerate) and of (2R)-2,3-dihydroxy-3-methylbutanoate (2,3-dihydroxyisovalerate) into 2-oxo-3-methylbutanoate (2-oxoisovalerate), the penultimate precursor to L-isoleucine and L-valine, respectively. In Koribacter versatilis (strain Ellin345), this protein is Dihydroxy-acid dehydratase.